The sequence spans 452 residues: CASP-like protein 4A1 (452 aa).

The segment covering 1 to 17 has biased composition (basic and acidic residues); it reads MGLRDSLKEREDRRSSE. Disordered stretches follow at residues 1–39, 71–147, and 164–283; these read MGLR…RKES, RAGP…ARSS, and AKYV…VQFR. The Cytoplasmic portion of the chain corresponds to 1–305; that stretch reads MGLRDSLKER…KRRAAAMQRT (305 aa). Positions 25 to 34 are enriched in polar residues; the sequence is SWMTRESTTG. 2 stretches are compositionally biased toward low complexity: residues 105-126 and 190-205; these read QAQA…TGSG and GWYS…AAPP. Residues 211 to 272 show a composition bias toward pro residues; the sequence is DPPPAPPRRQ…TAPAPAPVPA (62 aa). A helical transmembrane segment spans residues 306–326; it reads ALLARGAAAGLCLAALAVLAA. Topologically, residues 327 to 347 are extracellular; sequence DTRKGWARDSYSNYTQFRYSE. Asn339 carries N-linked (GlcNAc...) asparagine glycosylation. Residues 348–368 form a helical membrane-spanning segment; the sequence is AVNVIGFIYSVFQFVALVELM. The Cytoplasmic segment spans residues 369 to 389; it reads RRNKHLIPHPKRDLFDFTMDQ. Residues 390–406 form a helical membrane-spanning segment; it reads VLTYLLISSSSSATARV. The Extracellular segment spans residues 407-423; the sequence is SDLIDNWGSDPFPSMAN. Residue Asn423 is glycosylated (N-linked (GlcNAc...) asparagine). A helical membrane pass occupies residues 424–444; it reads GSIAISFLAFAVFAICSLISA. Residues 445 to 452 lie on the Cytoplasmic side of the membrane; that stretch reads YNLFRRDV.

Belongs to the Casparian strip membrane proteins (CASP) family. In terms of assembly, homodimer and heterodimers.

It localises to the cell membrane. The polypeptide is CASP-like protein 4A1 (Sorghum bicolor (Sorghum)).